A 441-amino-acid polypeptide reads, in one-letter code: UDP-N-acetylglucosamine--N-acetylmuramyl-(pentapeptide) pyrophosphoryl-undecaprenol N-acetylglucosamine transferase (441 aa).

UDP-N-acetyl-alpha-D-glucosamine is bound by residues 28-30 (TGG), Asn-140, Arg-176, Ser-204, Ile-257, and Gln-302.

Belongs to the glycosyltransferase 28 family. MurG subfamily.

It localises to the cell inner membrane. It carries out the reaction di-trans,octa-cis-undecaprenyl diphospho-N-acetyl-alpha-D-muramoyl-L-alanyl-D-glutamyl-meso-2,6-diaminopimeloyl-D-alanyl-D-alanine + UDP-N-acetyl-alpha-D-glucosamine = di-trans,octa-cis-undecaprenyl diphospho-[N-acetyl-alpha-D-glucosaminyl-(1-&gt;4)]-N-acetyl-alpha-D-muramoyl-L-alanyl-D-glutamyl-meso-2,6-diaminopimeloyl-D-alanyl-D-alanine + UDP + H(+). The protein operates within cell wall biogenesis; peptidoglycan biosynthesis. Cell wall formation. Catalyzes the transfer of a GlcNAc subunit on undecaprenyl-pyrophosphoryl-MurNAc-pentapeptide (lipid intermediate I) to form undecaprenyl-pyrophosphoryl-MurNAc-(pentapeptide)GlcNAc (lipid intermediate II). This chain is UDP-N-acetylglucosamine--N-acetylmuramyl-(pentapeptide) pyrophosphoryl-undecaprenol N-acetylglucosamine transferase, found in Xanthomonas oryzae pv. oryzae (strain KACC10331 / KXO85).